The sequence spans 479 residues: UDP-glycosyltransferase 71B6 (479 aa).

Residues serine 275, 342-344, 359-367, and 381-384 each bind UDP-alpha-D-glucose; these read AEQ, HGGWNSTLE, and YAEQ.

This sequence belongs to the UDP-glycosyltransferase family.

In terms of biological role, glucosyltransferase that glucosylates the (+) enantiomer of abscisic acid ((+)-ABA). Is not active on structural analogs with alterations to the 8'- and 9'- methyl groups. The chain is UDP-glycosyltransferase 71B6 (UGT71B6) from Arabidopsis thaliana (Mouse-ear cress).